Consider the following 294-residue polypeptide: Agamous-like MADS-box protein AGL82 (294 aa).

Residues 1-51 (MVPKVVDLQRIANDKTRITTYKKRKASLYKKAQEFSTLCGVETCLIVYGPT) enclose the MADS-box domain.

In terms of assembly, interacts with MEE14/CBP1.

The protein localises to the nucleus. Functionally, probable transcription factor that may function in the maintenance of the proper function of the central cell in pollen tube attraction. This is Agamous-like MADS-box protein AGL82 from Arabidopsis thaliana (Mouse-ear cress).